We begin with the raw amino-acid sequence, 410 residues long: Serine proteinase inhibitor A3K (410 aa).

A signal peptide spans 1 to 24 (MPSAISRGLLLLAGLCYLVFGIMA). N-linked (GlcNAc...) asparagine glycosylation is found at Asn62, Asn99, Asn162, Asn229, and Asn263. The segment at 360 to 381 (GTEAAAATVLEATRTARPPRLS) is RCL.

Belongs to the serpin family.

Its subcellular location is the secreted. The protein resides in the extracellular space. In terms of biological role, contrapsin inhibits trypsin-like proteases. This chain is Serine proteinase inhibitor A3K (SERPINA3K), found in Cavia porcellus (Guinea pig).